The following is a 114-amino-acid chain: UPF0145 protein STK_10800 (114 aa).

This sequence belongs to the UPF0145 family.

This Sulfurisphaera tokodaii (strain DSM 16993 / JCM 10545 / NBRC 100140 / 7) (Sulfolobus tokodaii) protein is UPF0145 protein STK_10800.